The following is a 333-amino-acid chain: Serine proteinase inhibitor 2 (333 aa).

The protein belongs to the serpin family. Poxviruses subfamily.

It localises to the host cytoplasm. Weak inhibitor of the interleukin-1-beta converting enzyme (ICE) and of granzyme B. Does not form a stable complex with ICE, but can for a stable complex with granzyme B. The chain is Serine proteinase inhibitor 2 (SERP2) from Myxoma virus (strain Uriarra) (MYXV).